A 232-amino-acid polypeptide reads, in one-letter code: Enolase-phosphatase E1 (232 aa).

It belongs to the HAD-like hydrolase superfamily. MasA/MtnC family. As to quaternary structure, monomer. The cofactor is Mg(2+).

The catalysed reaction is 5-methylsulfanyl-2,3-dioxopentyl phosphate + H2O = 1,2-dihydroxy-5-(methylsulfanyl)pent-1-en-3-one + phosphate. Its pathway is amino-acid biosynthesis; L-methionine biosynthesis via salvage pathway; L-methionine from S-methyl-5-thio-alpha-D-ribose 1-phosphate: step 3/6. The protein operates within amino-acid biosynthesis; L-methionine biosynthesis via salvage pathway; L-methionine from S-methyl-5-thio-alpha-D-ribose 1-phosphate: step 4/6. In terms of biological role, bifunctional enzyme that catalyzes the enolization of 2,3-diketo-5-methylthiopentyl-1-phosphate (DK-MTP-1-P) into the intermediate 2-hydroxy-3-keto-5-methylthiopentenyl-1-phosphate (HK-MTPenyl-1-P), which is then dephosphorylated to form the acireductone 1,2-dihydroxy-3-keto-5-methylthiopentene (DHK-MTPene). This Xylella fastidiosa (strain M12) protein is Enolase-phosphatase E1.